The following is a 197-amino-acid chain: Holliday junction branch migration complex subunit RuvA (197 aa).

The tract at residues 1–64 (MIGRLSGKLI…EDAHLLYGFA (64 aa)) is domain I. The segment at 65-143 (SKEERQTFRQ…TGGNLTVPGG (79 aa)) is domain II. The tract at residues 143–147 (GLPFA) is flexible linker. Residues 148 to 197 (ATPDEKSDIVNALLALGYNEKEAAAATKSLPADVTVSEGVRLALKSLMKV) are domain III.

The protein belongs to the RuvA family. As to quaternary structure, homotetramer. Forms an RuvA(8)-RuvB(12)-Holliday junction (HJ) complex. HJ DNA is sandwiched between 2 RuvA tetramers; dsDNA enters through RuvA and exits via RuvB. An RuvB hexamer assembles on each DNA strand where it exits the tetramer. Each RuvB hexamer is contacted by two RuvA subunits (via domain III) on 2 adjacent RuvB subunits; this complex drives branch migration. In the full resolvosome a probable DNA-RuvA(4)-RuvB(12)-RuvC(2) complex forms which resolves the HJ.

It is found in the cytoplasm. Its function is as follows. The RuvA-RuvB-RuvC complex processes Holliday junction (HJ) DNA during genetic recombination and DNA repair, while the RuvA-RuvB complex plays an important role in the rescue of blocked DNA replication forks via replication fork reversal (RFR). RuvA specifically binds to HJ cruciform DNA, conferring on it an open structure. The RuvB hexamer acts as an ATP-dependent pump, pulling dsDNA into and through the RuvAB complex. HJ branch migration allows RuvC to scan DNA until it finds its consensus sequence, where it cleaves and resolves the cruciform DNA. The chain is Holliday junction branch migration complex subunit RuvA from Chromobacterium violaceum (strain ATCC 12472 / DSM 30191 / JCM 1249 / CCUG 213 / NBRC 12614 / NCIMB 9131 / NCTC 9757 / MK).